Consider the following 326-residue polypeptide: Glutaredoxin 3 (326 aa).

One can recognise a Thioredoxin domain in the interval 1–108; that stretch reads MANFTDAASL…LTNKVQRLGS (108 aa). 2 consecutive Glutaredoxin domains span residues 125-227 and 227-326; these read NQRL…VSLE and ENRL…KGEN. Residues cysteine 150 and cysteine 252 each coordinate [2Fe-2S] cluster.

Homodimer; the homodimer is independent of 2Fe-2S clusters. Heterotrimer; forms a heterotrimeric complex composed by two bola2 molecules and one glrx3 molecule; linked by [2Fe-2S] clusters.

Its subcellular location is the cytoplasm. It is found in the cytosol. Functionally, together with bola2, acts as a cytosolic iron-sulfur (Fe-S) cluster assembly factor that facilitates [2Fe-2S] cluster insertion into a subset of cytosolic proteins. Required for hemoglobin maturation. Does not possess any thyoredoxin activity since it lacks the conserved motif that is essential for catalytic activity. This is Glutaredoxin 3 (glrx3) from Danio rerio (Zebrafish).